We begin with the raw amino-acid sequence, 256 residues long: 5'-nucleotidase SurE (256 aa).

Residues Asp8, Asp9, Ser40, and Asn92 each contribute to the a divalent metal cation site.

This sequence belongs to the SurE nucleotidase family. The cofactor is a divalent metal cation.

It is found in the cytoplasm. It catalyses the reaction a ribonucleoside 5'-phosphate + H2O = a ribonucleoside + phosphate. Its function is as follows. Nucleotidase that shows phosphatase activity on nucleoside 5'-monophosphates. This chain is 5'-nucleotidase SurE, found in Sinorhizobium medicae (strain WSM419) (Ensifer medicae).